The sequence spans 664 residues: DNA ligase (664 aa).

NAD(+) contacts are provided by residues 32-36 (DKEYD) and 80-81 (SL). K122 acts as the N6-AMP-lysine intermediate in catalysis. Positions 144, 178, and 314 each coordinate NAD(+). 4 residues coordinate Zn(2+): C407, C410, C423, and C429. Residues 587-664 (IDENPFMGKT…NEEEFSNKIK (78 aa)) form the BRCT domain.

This sequence belongs to the NAD-dependent DNA ligase family. LigA subfamily. It depends on Mg(2+) as a cofactor. Mn(2+) is required as a cofactor.

It carries out the reaction NAD(+) + (deoxyribonucleotide)n-3'-hydroxyl + 5'-phospho-(deoxyribonucleotide)m = (deoxyribonucleotide)n+m + AMP + beta-nicotinamide D-nucleotide.. Functionally, DNA ligase that catalyzes the formation of phosphodiester linkages between 5'-phosphoryl and 3'-hydroxyl groups in double-stranded DNA using NAD as a coenzyme and as the energy source for the reaction. It is essential for DNA replication and repair of damaged DNA. In Clostridium botulinum (strain 657 / Type Ba4), this protein is DNA ligase.